We begin with the raw amino-acid sequence, 97 residues long: Translation initiation factor 1A (97 aa).

The region spanning 8–82 (IRVRLPDRKK…DRADIVWRYT (75 aa)) is the S1-like domain.

This sequence belongs to the eIF-1A family.

Functionally, seems to be required for maximal rate of protein biosynthesis. Enhances ribosome dissociation into subunits and stabilizes the binding of the initiator Met-tRNA(I) to 40 S ribosomal subunits. The polypeptide is Translation initiation factor 1A (eIF1A) (Archaeoglobus fulgidus (strain ATCC 49558 / DSM 4304 / JCM 9628 / NBRC 100126 / VC-16)).